The following is a 1388-amino-acid chain: Rho-associated protein kinase 2 (1388 aa).

The disordered stretch occupies residues 1-24 (MSRPPPTGKMPGAPEAVSGDGAGA). A Protein kinase domain is found at 92–354 (YDVVKVIGRG…VEEIKQHPFF (263 aa)). ATP-binding positions include 98–106 (IGRGAFGEV) and Lys-121. Asp-214 (proton acceptor) is an active-site residue. The AGC-kinase C-terminal domain occupies 357–425 (DQWNWDNIRE…YRENLLLSDS (69 aa)). An interaction with PPP1R12A region spans residues 363–784 (NIRETAAPVV…INELLKQKDV (422 aa)). The interaction with NPM1 stretch occupies residues 373–420 (PELSSDIDSSNFDDIEDDKGDVETFPIPKAFVGNQLPFIGFTYYRENL). Position 414 is a phosphothreonine; by ROCK2 (Thr-414). Positions 497-573 (ALRQLEREKA…LDETNALLRT (77 aa)) constitute an REM-1 domain. A compositionally biased stretch (basic and acidic residues) spans 512–530 (NAEYQRKADHEADKKRNLE). Residues 512 to 532 (NAEYQRKADHEADKKRNLEND) are disordered. At Tyr-722 the chain carries Phosphotyrosine; by SRC. The 69-residue stretch at 979 to 1047 (TSDVANLANE…LAEIMNRKEP (69 aa)) folds into the RhoBD domain. Residues 979–1047 (TSDVANLANE…LAEIMNRKEP (69 aa)) are RHOA binding. Residues 1054 to 1126 (TDMRRKEKEN…EQLRSQLQAL (73 aa)) are a coiled coil. Ser-1137 carries the post-translational modification Phosphoserine. A PH domain is found at 1150-1349 (ESRLEGWLSL…WVSRLVKKIP (200 aa)). Residue Thr-1212 is modified to Phosphothreonine. The segment at 1260–1315 (GHEFIPTLYHFPTNCEACMKPLWHMFKPPPALECRRCHIKCHKDHMDKKEEIIAPC) adopts a Phorbol-ester/DAG-type zinc-finger fold. The disordered stretch occupies residues 1345 to 1388 (VKKIPKKPPAPDPFARSSPRTSMKIQQNQSIRRPSRQLAANKPS). Phosphoserine occurs at positions 1362 and 1374. Residues 1362-1376 (SPRTSMKIQQNQSIR) show a composition bias toward polar residues.

The protein belongs to the protein kinase superfamily. AGC Ser/Thr protein kinase family. In terms of assembly, homodimer. Interacts with IRS1. Interacts with RAF1. Interacts with RHOA (activated by GTP), RHOB and RHOC. Interacts with PPP1R12A. Interacts with EP300. Interacts with CHORDC1. Interacts with BRCA2. Interacts with NPM1; this interaction enhances ROCK2 activity. Interacts with SORL1. Interacts with PJVK. The cofactor is Mg(2+). Autophosphorylated. Phosphorylation at Tyr-722 reduces its binding to RHOA and is crucial for focal adhesion dynamics. Dephosphorylation by PTPN11 stimulates its RHOA binding activity. Post-translationally, cleaved by granzyme B during apoptosis. This leads to constitutive activation of the kinase and membrane blebbing.

It is found in the cytoplasm. Its subcellular location is the cell membrane. The protein localises to the nucleus. The protein resides in the cytoskeleton. It localises to the microtubule organizing center. It is found in the centrosome. It carries out the reaction L-seryl-[protein] + ATP = O-phospho-L-seryl-[protein] + ADP + H(+). The enzyme catalyses L-threonyl-[protein] + ATP = O-phospho-L-threonyl-[protein] + ADP + H(+). Activated by RHOA binding. Inhibited by Y-27632. In terms of biological role, protein kinase which is a key regulator of actin cytoskeleton and cell polarity. Involved in regulation of smooth muscle contraction, actin cytoskeleton organization, stress fiber and focal adhesion formation, neurite retraction, cell adhesion and motility via phosphorylation of ADD1, BRCA2, CNN1, EZR, DPYSL2, EP300, MSN, MYL9/MLC2, NPM1, RDX, PPP1R12A and VIM. Phosphorylates SORL1 and IRF4. Acts as a negative regulator of VEGF-induced angiogenic endothelial cell activation. Positively regulates the activation of p42/MAPK1-p44/MAPK3 and of p90RSK/RPS6KA1 during myogenic differentiation. Plays an important role in the timely initiation of centrosome duplication. Inhibits keratinocyte terminal differentiation. May regulate closure of the eyelids and ventral body wall through organization of actomyosin bundles. Plays a critical role in the regulation of spine and synaptic properties in the hippocampus. Plays an important role in generating the circadian rhythm of the aortic myofilament Ca(2+) sensitivity and vascular contractility by modulating the myosin light chain phosphorylation. The protein is Rho-associated protein kinase 2 (ROCK2) of Sus scrofa (Pig).